The sequence spans 309 residues: Aromatic prenyltransferase (309 aa).

It belongs to the aromatic prenyltransferase family.

Prenyltransferase that attaches isoprenoid moieties to carbon atoms of aromatic substrates in an enzyme-catalyzed Friedel-Crafts reaction. Shows specificity for dimethylallyl diphosphate (DMAPP) and does not accept geranyl diphosphate (GPP) or isopentenyl diphosphate (IPP). Prenylates the artificial substrate 2,7-dihydroxynaphthalene (2,7-DHN), as well as dihydrophenazine-1-carboxylic acid and 4-hydroxybenzoic acid at lower levels. Only traces of products are detected with aspulvinone E or flaviolin as substrates; and no product is formed with L-tryptophan, L-tyrosine, or 4-hydroxyphenylpyruvate. Ptf seems no to be involved in the prenylation reaction in the biosynthesis of aspulvinone H and J and the physiological function of ptf remains unknown. In Sclerotinia sclerotiorum (strain ATCC 18683 / 1980 / Ss-1) (White mold), this protein is Aromatic prenyltransferase.